Consider the following 623-residue polypeptide: Leucine aminopeptidase 2 (623 aa).

Residues Q136–Q138 and P273–E278 contribute to the a peptide site. A Zn(2+)-binding site is contributed by H302. Residue E303 is the Proton acceptor of the active site. 2 residues coordinate Zn(2+): H306 and E325. Y390 (proton donor) is an active-site residue.

The protein belongs to the peptidase M1 family. The cofactor is Zn(2+).

It localises to the cytoplasm. The protein localises to the nucleus. The enzyme catalyses an epoxide + H2O = an ethanediol. Functionally, aminopeptidase that preferentially cleaves di- and tripeptides. Also has low epoxide hydrolase activity (in vitro). Can hydrolyze the epoxide leukotriene LTA(4) but it forms preferentially 5,6-dihydroxy-7,9,11,14-eicosatetraenoic acid rather than the cytokine leukotriene B(4) as the product compared to the homologous mammalian enzyme (in vitro). The protein is Leucine aminopeptidase 2 of Phaeosphaeria nodorum (strain SN15 / ATCC MYA-4574 / FGSC 10173) (Glume blotch fungus).